The primary structure comprises 111 residues: Small ribosomal subunit protein uS10 (111 aa).

Belongs to the universal ribosomal protein uS10 family. Part of the 30S ribosomal subunit.

Functionally, involved in the binding of tRNA to the ribosomes. This chain is Small ribosomal subunit protein uS10, found in Protochlamydia amoebophila (strain UWE25).